Reading from the N-terminus, the 204-residue chain is Large ribosomal subunit protein uL4 (204 aa).

A disordered region spans residues 44–76; the sequence is KRQGTQSAKTRSEVRGGGIKPWRQKGTGRARQG.

It belongs to the universal ribosomal protein uL4 family. As to quaternary structure, part of the 50S ribosomal subunit.

One of the primary rRNA binding proteins, this protein initially binds near the 5'-end of the 23S rRNA. It is important during the early stages of 50S assembly. It makes multiple contacts with different domains of the 23S rRNA in the assembled 50S subunit and ribosome. In terms of biological role, forms part of the polypeptide exit tunnel. In Clostridium perfringens (strain 13 / Type A), this protein is Large ribosomal subunit protein uL4.